The following is a 246-amino-acid chain: Eukaryotic translation initiation factor 6 (246 aa).

Residues S174 and S175 each carry the phosphoserine; by CK1 modification.

This sequence belongs to the eIF-6 family. As to quaternary structure, monomer. Associates with the 60S ribosomal subunit. Post-translationally, phosphorylation at Ser-174 and Ser-175 promotes nuclear export.

The protein resides in the cytoplasm. The protein localises to the nucleus. Its subcellular location is the nucleolus. Its function is as follows. Binds to the 60S ribosomal subunit and prevents its association with the 40S ribosomal subunit to form the 80S initiation complex in the cytoplasm. Is also involved in ribosome biogenesis. Associates with pre-60S subunits in the nucleus and is involved in its nuclear export. The polypeptide is Eukaryotic translation initiation factor 6 (tif-6) (Neurospora crassa (strain ATCC 24698 / 74-OR23-1A / CBS 708.71 / DSM 1257 / FGSC 987)).